The chain runs to 185 residues: Peptidyl-tRNA hydrolase (185 aa).

Tyrosine 14 is a binding site for tRNA. The active-site Proton acceptor is histidine 19. 3 residues coordinate tRNA: phenylalanine 64, asparagine 66, and asparagine 112.

It belongs to the PTH family. Monomer.

It localises to the cytoplasm. The catalysed reaction is an N-acyl-L-alpha-aminoacyl-tRNA + H2O = an N-acyl-L-amino acid + a tRNA + H(+). Hydrolyzes ribosome-free peptidyl-tRNAs (with 1 or more amino acids incorporated), which drop off the ribosome during protein synthesis, or as a result of ribosome stalling. In terms of biological role, catalyzes the release of premature peptidyl moieties from peptidyl-tRNA molecules trapped in stalled 50S ribosomal subunits, and thus maintains levels of free tRNAs and 50S ribosomes. The polypeptide is Peptidyl-tRNA hydrolase (Alkaliphilus metalliredigens (strain QYMF)).